We begin with the raw amino-acid sequence, 294 residues long: 4-hydroxy-tetrahydrodipicolinate synthase (294 aa).

Position 47 (Thr47) interacts with pyruvate. The active-site Proton donor/acceptor is the Tyr135. The Schiff-base intermediate with substrate role is filled by Lys163. A pyruvate-binding site is contributed by Ile206.

Belongs to the DapA family. In terms of assembly, homodimer.

Its subcellular location is the cytoplasm. The enzyme catalyses L-aspartate 4-semialdehyde + pyruvate = (2S,4S)-4-hydroxy-2,3,4,5-tetrahydrodipicolinate + H2O + H(+). It functions in the pathway amino-acid biosynthesis; L-lysine biosynthesis via DAP pathway; (S)-tetrahydrodipicolinate from L-aspartate: step 3/4. Its function is as follows. Catalyzes the condensation of (S)-aspartate-beta-semialdehyde [(S)-ASA] and pyruvate to 4-hydroxy-tetrahydrodipicolinate (HTPA). The protein is 4-hydroxy-tetrahydrodipicolinate synthase of Staphylococcus haemolyticus (strain JCSC1435).